The following is a 163-amino-acid chain: Small ribosomal subunit protein uS5 (163 aa).

The 64-residue stretch at 8-71 folds into the S5 DRBM domain; that stretch reads LVEKIVYLNR…ERAKKDMVQI (64 aa).

The protein belongs to the universal ribosomal protein uS5 family. Part of the 30S ribosomal subunit. Contacts proteins S4 and S8.

Its function is as follows. With S4 and S12 plays an important role in translational accuracy. Functionally, located at the back of the 30S subunit body where it stabilizes the conformation of the head with respect to the body. In Nitratidesulfovibrio vulgaris (strain DSM 19637 / Miyazaki F) (Desulfovibrio vulgaris), this protein is Small ribosomal subunit protein uS5.